The primary structure comprises 686 residues: WD repeat-containing protein 93 (686 aa).

The span at 1–10 shows a compositional bias: polar residues; that stretch reads MSFPRGSQTQ. The segment at 1-40 is disordered; it reads MSFPRGSQTQKIKHPIGTRKGPLEVPPPTEKDWPKDDEQD. The span at 29–40 shows a compositional bias: basic and acidic residues; sequence TEKDWPKDDEQD. The stretch at 410–449 is one WD repeat; sequence PCAAPIAVSQLSCSSSYLVLACEDGVLTLWDLAKGFPLGV.

In Homo sapiens (Human), this protein is WD repeat-containing protein 93 (WDR93).